Reading from the N-terminus, the 201-residue chain is Recombination protein RecR (201 aa).

The segment at 60–75 (CSCCGNVDTIDPCTVC) adopts a C4-type zinc-finger fold. The 96-residue stretch at 83–178 (SVIIVVEDVS…KITRLAHGVP (96 aa)) folds into the Toprim domain.

It belongs to the RecR family.

May play a role in DNA repair. It seems to be involved in an RecBC-independent recombinational process of DNA repair. It may act with RecF and RecO. This Agrobacterium fabrum (strain C58 / ATCC 33970) (Agrobacterium tumefaciens (strain C58)) protein is Recombination protein RecR.